A 489-amino-acid polypeptide reads, in one-letter code: Lysine--tRNA ligase (489 aa).

E399 and E406 together coordinate Mg(2+).

Belongs to the class-II aminoacyl-tRNA synthetase family. As to quaternary structure, homodimer. The cofactor is Mg(2+).

The protein localises to the cytoplasm. It carries out the reaction tRNA(Lys) + L-lysine + ATP = L-lysyl-tRNA(Lys) + AMP + diphosphate. This is Lysine--tRNA ligase from Synechococcus sp. (strain CC9311).